A 287-amino-acid polypeptide reads, in one-letter code: Ribosomal RNA small subunit methyltransferase A (287 aa).

6 residues coordinate S-adenosyl-L-methionine: N28, L30, G55, E76, D101, and N125.

This sequence belongs to the class I-like SAM-binding methyltransferase superfamily. rRNA adenine N(6)-methyltransferase family. RsmA subfamily.

It localises to the cytoplasm. It catalyses the reaction adenosine(1518)/adenosine(1519) in 16S rRNA + 4 S-adenosyl-L-methionine = N(6)-dimethyladenosine(1518)/N(6)-dimethyladenosine(1519) in 16S rRNA + 4 S-adenosyl-L-homocysteine + 4 H(+). Its function is as follows. Specifically dimethylates two adjacent adenosines (A1518 and A1519) in the loop of a conserved hairpin near the 3'-end of 16S rRNA in the 30S particle. May play a critical role in biogenesis of 30S subunits. This chain is Ribosomal RNA small subunit methyltransferase A, found in Alkaliphilus metalliredigens (strain QYMF).